Here is a 390-residue protein sequence, read N- to C-terminus: Lipoyl synthase, mitochondrial (390 aa).

The transit peptide at 1–18 (MALYRAPKLQRSLLNRCL) directs the protein to the mitochondrion. Residues Cys-99, Cys-104, Cys-110, Cys-137, Cys-141, Cys-144, and Ser-351 each contribute to the [4Fe-4S] cluster site. One can recognise a Radical SAM core domain in the interval 120-340 (AEGRSAATAT…KQVAEDLGFL (221 aa)).

This sequence belongs to the radical SAM superfamily. Lipoyl synthase family. The cofactor is [4Fe-4S] cluster.

The protein localises to the mitochondrion. It carries out the reaction [[Fe-S] cluster scaffold protein carrying a second [4Fe-4S](2+) cluster] + N(6)-octanoyl-L-lysyl-[protein] + 2 oxidized [2Fe-2S]-[ferredoxin] + 2 S-adenosyl-L-methionine + 4 H(+) = [[Fe-S] cluster scaffold protein] + N(6)-[(R)-dihydrolipoyl]-L-lysyl-[protein] + 4 Fe(3+) + 2 hydrogen sulfide + 2 5'-deoxyadenosine + 2 L-methionine + 2 reduced [2Fe-2S]-[ferredoxin]. It participates in protein modification; protein lipoylation via endogenous pathway; protein N(6)-(lipoyl)lysine from octanoyl-[acyl-carrier-protein]: step 2/2. In terms of biological role, catalyzes the radical-mediated insertion of two sulfur atoms into the C-6 and C-8 positions of the octanoyl moiety bound to the lipoyl domains of lipoate-dependent enzymes, thereby converting the octanoylated domains into lipoylated derivatives. This is Lipoyl synthase, mitochondrial from Coprinopsis cinerea (strain Okayama-7 / 130 / ATCC MYA-4618 / FGSC 9003) (Inky cap fungus).